The following is a 326-amino-acid chain: Malate dehydrogenase (326 aa).

11–17 is an NAD(+) binding site; it reads GAAGQIG. Residues arginine 92 and arginine 98 each coordinate substrate. Residues asparagine 105, glutamine 112, and 129 to 131 contribute to the NAD(+) site; that span reads VGN. 2 residues coordinate substrate: asparagine 131 and arginine 162. The Proton acceptor role is filled by histidine 187.

The protein belongs to the LDH/MDH superfamily. MDH type 2 family.

The catalysed reaction is (S)-malate + NAD(+) = oxaloacetate + NADH + H(+). Functionally, catalyzes the reversible oxidation of malate to oxaloacetate. This is Malate dehydrogenase from Alkalilimnicola ehrlichii (strain ATCC BAA-1101 / DSM 17681 / MLHE-1).